A 789-amino-acid chain; its full sequence is Protein translocase subunit SecA 2 (789 aa).

Residues Gln-79, 97–101 (GEGKT), and Asp-487 each bind ATP.

It belongs to the SecA family. In terms of assembly, monomer and homodimer. Part of the essential Sec protein translocation apparatus which comprises SecA, SecYEG and auxiliary proteins SecDF. Other proteins may also be involved.

It localises to the cell membrane. It is found in the cytoplasm. The enzyme catalyses ATP + H2O + cellular proteinSide 1 = ADP + phosphate + cellular proteinSide 2.. In terms of biological role, part of the Sec protein translocase complex. Interacts with the SecYEG preprotein conducting channel. Has a central role in coupling the hydrolysis of ATP to the transfer of proteins into and across the cell membrane, serving as an ATP-driven molecular motor driving the stepwise translocation of polypeptide chains across the membrane. The chain is Protein translocase subunit SecA 2 from Pediococcus pentosaceus (strain ATCC 25745 / CCUG 21536 / LMG 10740 / 183-1w).